The following is a 403-amino-acid chain: MDAKKLDTGPRDAINWLPDEILGKILSLLATKQAVSTSVLSKKWRTLFKLVDTLEFDDSVSGMGEQEASYVFPESFKDLVDRTVALQCDYPIRKLSLKCHVGRDDEQRKACVGRWISNVVGRGVSEVVLRINDRGLHFLSPQLLTCKTLVKLTLGTRLFLGKLPSYVSLPSLKFLFIHSVFFDDFGELSNVLLAGCPVVEALYLNQNGESMPYTISSPTLKRLSVHYEYHFESVISFDLPNLEYLDYSDYALYGYPQVNLESLVEAYLNLDKAEHVESPDVTKLIMGIRNVEILSLSPDSVGVIYSCCKYGLLLPVFNNLVSLSFGTKKTRAWKLLADILKQSPKLETLIIEDLNGYPLDVSMPLNQVKELQILEYGESDDEVKRLKSFLGEESMIEVVFPEV.

The region spanning 11–59 is the F-box domain; the sequence is RDAINWLPDEILGKILSLLATKQAVSTSVLSKKWRTLFKLVDTLEFDDS. LRR repeat units follow at residues 239–262 and 288–312; these read LPNL…NLES and IRNV…KYGL.

This is F-box/LRR-repeat protein At1g06630 from Arabidopsis thaliana (Mouse-ear cress).